Consider the following 79-residue polypeptide: Small ribosomal subunit protein bS18 (79 aa).

This sequence belongs to the bacterial ribosomal protein bS18 family. As to quaternary structure, part of the 30S ribosomal subunit. Forms a tight heterodimer with protein bS6.

Functionally, binds as a heterodimer with protein bS6 to the central domain of the 16S rRNA, where it helps stabilize the platform of the 30S subunit. The sequence is that of Small ribosomal subunit protein bS18 from Nitrobacter hamburgensis (strain DSM 10229 / NCIMB 13809 / X14).